Here is a 462-residue protein sequence, read N- to C-terminus: GTPase Der (462 aa).

EngA-type G domains follow at residues 2–164 (QKVI…EEKV) and 198–369 (IRVG…KNYT). GTP contacts are provided by residues 8–15 (GKPNVGKS), 55–59 (DSGGL), 116–119 (NKID), 204–211 (GRVNVGKS), 251–255 (DTAGI), and 315–318 (NKWD). The KH-like domain occupies 370–454 (QKIQTSKLNE…PIVLIPKKRG (85 aa)).

It belongs to the TRAFAC class TrmE-Era-EngA-EngB-Septin-like GTPase superfamily. EngA (Der) GTPase family. Associates with the 50S ribosomal subunit.

Functionally, GTPase that plays an essential role in the late steps of ribosome biogenesis. In Campylobacter concisus (strain 13826), this protein is GTPase Der.